Here is a 493-residue protein sequence, read N- to C-terminus: Glutamyl-tRNA(Gln) amidotransferase subunit A (493 aa).

Residues Lys-79 and Ser-159 each act as charge relay system in the active site. Ser-183 serves as the catalytic Acyl-ester intermediate.

This sequence belongs to the amidase family. GatA subfamily. Heterotrimer of A, B and C subunits.

The enzyme catalyses L-glutamyl-tRNA(Gln) + L-glutamine + ATP + H2O = L-glutaminyl-tRNA(Gln) + L-glutamate + ADP + phosphate + H(+). Functionally, allows the formation of correctly charged Gln-tRNA(Gln) through the transamidation of misacylated Glu-tRNA(Gln) in organisms which lack glutaminyl-tRNA synthetase. The reaction takes place in the presence of glutamine and ATP through an activated gamma-phospho-Glu-tRNA(Gln). This is Glutamyl-tRNA(Gln) amidotransferase subunit A from Rhizobium etli (strain ATCC 51251 / DSM 11541 / JCM 21823 / NBRC 15573 / CFN 42).